Reading from the N-terminus, the 326-residue chain is Probable iron chelatin transport system permease protein jhp_0822 (326 aa).

Transmembrane regions (helical) follow at residues 7–27 (IALACVILAVVVLLFGGESLS), 64–84 (ILALLVGASLSGSGVVMQTIL), 91–111 (PFLLGISSGAMLGVAMAIAVV), 113–133 (SNIAILAFFGAILPSLAVLAM), 142–162 (LSLVLSGVVLSAFLSALAGAI), 164–184 (FFVIPQKAQAIVVWLLGSLSL), 187–207 (YKDCLIAFIGLSLGFIPLFLL), 241–261 (VASALAVSVSGTIGWIGLVIP), 275–295 (LLLSSLLMGAFFLLLADVVAK), and 301–321 (DLPVGIATSVLGAPFFLWLLF).

Belongs to the binding-protein-dependent transport system permease family. FecCD subfamily.

It localises to the cell inner membrane. Part of a binding-protein-dependent transport system for an iron chelatin; probably responsible for the translocation of the substrate across the membrane. This chain is Probable iron chelatin transport system permease protein jhp_0822, found in Helicobacter pylori (strain J99 / ATCC 700824) (Campylobacter pylori J99).